A 196-amino-acid polypeptide reads, in one-letter code: MARSAYSYIRDAWKNPGDGQLAELQWQRQQEWRNEGAVERIERPTRLDKARSQGYKAKQGVIVARVSVRKGSARKRRHKAGRRSKRQGVTRITRRKDIQRVAEERASRTFPNLRVLNSYSVGQDGRQKWHEVILIDPNHPAIQNDDDLSWICADDQADRVFRGLTGAGRRNRGLSGKGKGSEKTRPSLRSNGGKGK.

Disordered regions lie at residues 72–93 and 163–196; these read SARK…TRIT and GLTG…GKGK.

The protein belongs to the eukaryotic ribosomal protein eL15 family. In terms of assembly, part of the 50S ribosomal subunit. Interacts with protein L7Ae and weakly with L44e.

The sequence is that of Large ribosomal subunit protein eL15 (rpl15e) from Haloarcula marismortui (strain ATCC 43049 / DSM 3752 / JCM 8966 / VKM B-1809) (Halobacterium marismortui).